Here is a 631-residue protein sequence, read N- to C-terminus: UvrABC system protein C (631 aa).

Residues 26–105 (SSPGVYQFKN…IKELKPRYNV (80 aa)) enclose the GIY-YIG domain. In terms of domain architecture, UVR spans 219 to 254 (SATIRSLNERMLSFAKELKFEQAAELKTQIDSLKRY).

It belongs to the UvrC family. As to quaternary structure, interacts with UvrB in an incision complex.

It is found in the cytoplasm. Functionally, the UvrABC repair system catalyzes the recognition and processing of DNA lesions. UvrC both incises the 5' and 3' sides of the lesion. The N-terminal half is responsible for the 3' incision and the C-terminal half is responsible for the 5' incision. The sequence is that of UvrABC system protein C from Chlorobium phaeobacteroides (strain DSM 266 / SMG 266 / 2430).